Consider the following 221-residue polypeptide: uncharacterized protein (221 aa).

Positions 1-30 (MVPPNPAHQPARRTQPQLQPQSQPRAQPLP) are disordered. The segment covering 12–25 (RRTQPQLQPQSQPR) has biased composition (polar residues). Residues 37–57 (VLCIIVALVLLGLLVGLAILI) traverse the membrane as a helical segment.

The protein localises to the membrane. This is an uncharacterized protein from Arabidopsis thaliana (Mouse-ear cress).